The primary structure comprises 177 residues: Large ribosomal subunit protein uL6 (177 aa).

It belongs to the universal ribosomal protein uL6 family. As to quaternary structure, part of the 50S ribosomal subunit.

Its function is as follows. This protein binds to the 23S rRNA, and is important in its secondary structure. It is located near the subunit interface in the base of the L7/L12 stalk, and near the tRNA binding site of the peptidyltransferase center. The chain is Large ribosomal subunit protein uL6 from Rickettsia canadensis (strain McKiel).